The chain runs to 119 residues: Ribonuclease P protein component (119 aa).

It belongs to the RnpA family. As to quaternary structure, consists of a catalytic RNA component (M1 or rnpB) and a protein subunit.

The enzyme catalyses Endonucleolytic cleavage of RNA, removing 5'-extranucleotides from tRNA precursor.. RNaseP catalyzes the removal of the 5'-leader sequence from pre-tRNA to produce the mature 5'-terminus. It can also cleave other RNA substrates such as 4.5S RNA. The protein component plays an auxiliary but essential role in vivo by binding to the 5'-leader sequence and broadening the substrate specificity of the ribozyme. The protein is Ribonuclease P protein component of Pediococcus pentosaceus (strain ATCC 25745 / CCUG 21536 / LMG 10740 / 183-1w).